We begin with the raw amino-acid sequence, 332 residues long: tRNA dimethylallyltransferase 2 (332 aa).

Residue Gly15–Thr22 participates in ATP binding. Thr17–Thr22 is a binding site for substrate. 2 interaction with substrate tRNA regions span residues Asp40–Met43 and Gln164–Arg168.

Belongs to the IPP transferase family. As to quaternary structure, monomer. The cofactor is Mg(2+).

The enzyme catalyses adenosine(37) in tRNA + dimethylallyl diphosphate = N(6)-dimethylallyladenosine(37) in tRNA + diphosphate. In terms of biological role, catalyzes the transfer of a dimethylallyl group onto the adenine at position 37 in tRNAs that read codons beginning with uridine, leading to the formation of N6-(dimethylallyl)adenosine (i(6)A). The chain is tRNA dimethylallyltransferase 2 from Hahella chejuensis (strain KCTC 2396).